The sequence spans 246 residues: MTNNAAAPLYSLRGLPLIGWRDMSHALNYLFADGQLKQGTLVAINAEKLLTAEDNPEVRALIAAAEFKYADGISVVRSIRKKFPQAQVSRVAGADLWEALMARAGKEGTPVFLVGGKPEVLAQTEAKLRTQWNVNIVGSQDGYFTPEQRQALFARIHASGAKIVTVAMGSPKQELLMRDCREVHPHALYMGVGGTYDVFTGHVKRAPKIWQNLGLEWLYRLLSQPKRITRQMRLLRYLRWHYTGDL.

Belongs to the glycosyltransferase 26 family.

It catalyses the reaction UDP-N-acetyl-alpha-D-mannosaminouronate + N-acetyl-alpha-D-glucosaminyl-di-trans,octa-cis-undecaprenyl diphosphate = beta-D-ManNAcA-(1-&gt;4)-alpha-D-GlcNAc-di-trans,octa-cis-undecaprenyl diphosphate + UDP + H(+). It functions in the pathway bacterial outer membrane biogenesis; enterobacterial common antigen biosynthesis. Its function is as follows. Catalyzes the synthesis of Und-PP-GlcNAc-ManNAcA (Lipid II), the second lipid-linked intermediate involved in enterobacterial common antigen (ECA) synthesis. This chain is UDP-N-acetyl-D-mannosaminuronic acid transferase, found in Salmonella choleraesuis (strain SC-B67).